The chain runs to 297 residues: 6-dehydroglucose reductase (297 aa).

Residues tryptophan 20, arginine 21, and aspartate 49 each coordinate NADP(+). The active-site Proton donor is tyrosine 54. D-glucose-binding residues include tyrosine 54, lysine 98, histidine 129, and arginine 130. NADP(+)-binding residues include serine 159, asparagine 160, glutamine 181, serine 211, leucine 213, glycine 215, glycine 261, threonine 262, asparagine 263, and arginine 267.

This sequence belongs to the aldo/keto reductase family. As to quaternary structure, homotrimer.

It carries out the reaction D-glucose + NADP(+) = 6-dehydro-D-glucose + NADPH + H(+). Its function is as follows. Part of the sulfoquinovose monooxygenase (sulfo-SMO) pathway, a D-sulfoquinovose degradation pathway that enables the complete utilization of all carbons within sulfoquinovose (SQ) with concomitant production of inorganic sulfite. Catalyzes the NADP-dependent reduction of 6-dehydro-D-glucose to D-glucose. Cannot use NADH. This Agrobacterium fabrum (strain C58 / ATCC 33970) (Agrobacterium tumefaciens (strain C58)) protein is 6-dehydroglucose reductase.